A 1124-amino-acid polypeptide reads, in one-letter code: Phytochrome A (1124 aa).

Residues 1–19 (MSTTRPSQSSNNSGRSRNS) show a composition bias toward low complexity. The segment at 1–21 (MSTTRPSQSSNNSGRSRNSAR) is disordered. The GAF domain maps to 218-401 (SMERLCDTMV…VFAIHVNKEI (184 aa)). A phytochromobilin-binding site is contributed by C323. PAS domains lie at 617–687 (VTSE…LQGE) and 750–821 (DYKA…VNFG). One can recognise a Histidine kinase domain in the interval 901–1120 (YMKRQIRNPL…ILSVELAAAH (220 aa)).

This sequence belongs to the phytochrome family. As to quaternary structure, homodimer. Post-translationally, contains one covalently linked phytochromobilin chromophore.

Its function is as follows. Regulatory photoreceptor which exists in two forms that are reversibly interconvertible by light: the Pr form that absorbs maximally in the red region of the spectrum and the Pfr form that absorbs maximally in the far-red region. Photoconversion of Pr to Pfr induces an array of morphogenic responses, whereas reconversion of Pfr to Pr cancels the induction of those responses. Pfr controls the expression of a number of nuclear genes including those encoding the small subunit of ribulose-bisphosphate carboxylase, chlorophyll A/B binding protein, protochlorophyllide reductase, rRNA, etc. It also controls the expression of its own gene(s) in a negative feedback fashion. The protein is Phytochrome A (PHYA) of Pisum sativum (Garden pea).